The following is a 706-amino-acid chain: Complement C1r-B subcomponent (706 aa).

The first 16 residues, 1 to 16 (MWLFALLVTLFYGVEG), serve as a signal peptide directing secretion. Residues 17-140 (SIYLPQKLYG…KGFLAYYQAV (124 aa)) form the CUB 1 domain. Residues E65, D73, and D118 each contribute to the Ca(2+) site. C70 and C88 form a disulfide bridge. An N-linked (GlcNAc...) asparagine glycan is attached at N124. Residues D141, L142, and E144 each contribute to the Ca(2+) site. An EGF-like; calcium-binding domain is found at 141–189 (DLDECASQPNSVEEGLQPRCQHLCHNYVGGYFCSCHPGYELQKDGQSCQ). 4 cysteine pairs are disulfide-bonded: C145-C164, C160-C173, C175-C188, and C192-C219. Positions 166, 167, and 170 each coordinate Ca(2+). The residue at position 166 (N166) is a (3R)-3-hydroxyasparagine. Residues 192 to 304 (CSSELYTEPS…RGWKLHYTTE (113 aa)) form the CUB 2 domain. S205 is modified (phosphoserine; by CK2). N220 carries N-linked (GlcNAc...) asparagine glycosylation. Ca(2+) is bound by residues D242, D252, D289, and D293. C249 and C267 are joined by a disulfide. Sushi domains are found at residues 306–372 (IKCP…RCKI) and 373–448 (KNCG…RCLP). Intrachain disulfides connect C308–C357, C337–C370, C375–C428, C405–C446, and C450–C578. Residues 463–703 (IIGGQPARPG…YVDWIKKEMG (241 aa)) enclose the Peptidase S1 domain. Catalysis depends on charge relay system residues H501 and D558. N582 is a glycosylation site (N-linked (GlcNAc...) asparagine). 2 cysteine pairs are disulfide-bonded: C621–C640 and C651–C681. S655 (charge relay system) is an active-site residue.

This sequence belongs to the peptidase S1 family. In terms of assembly, core component of the complement C1 complex, a calcium-dependent complex composed of 1 molecule of the C1Q subcomplex, 2 molecules of C1R and 2 molecules of C1S. The C1Q subcomplex is composed 18 subunits: 3 chains of C1QA, C1QB, and C1QC trimerize to form 6 collagen-like triple helices connected to six globular ligand-recognition modules. Within the C1 complex, C1R is a dimer of identical chains, each of which is activated by cleavage into two chains, heavy and light, connected by disulfide bonds. In terms of processing, cleaved and activated by autocatalytic processing to generate Complement C1r subcomponent heavy and light chains that are connected by disulfide bonds. The iron and 2-oxoglutarate dependent 3-hydroxylation of aspartate and asparagine is (R) stereospecific within EGF domains.

The protein localises to the secreted. The protein resides in the cell surface. It catalyses the reaction Selective cleavage of Lys(or Arg)-|-Ile bond in complement subcomponent C1s to form the active form of C1s (EC 3.4.21.42).. With respect to regulation, activated by the C1Q subcomplex of the C1 complex following C1Q binding to immunoglobulins (IgG or IgM) complexed with antigens to form antigen-antibody complexes on the surface of pathogens. Immunoglobulin-binding promotes autoactivation of C1R, which results in the cleavage of the Arg-Ile bond in the catalytic domain. Functionally, serine protease component of the complement C1 complex, a multiprotein complex that initiates the classical pathway of the complement system, a cascade of proteins that leads to phagocytosis and breakdown of pathogens and signaling that strengthens the adaptive immune system. C1R catalyzes the first enzymatic step in the classical complement pathway: it is activated by the C1Q subcomplex of the C1 complex, which associates with IgG or IgM immunoglobulins complexed with antigens to form antigen-antibody complexes on the surface of pathogens. Immunoglobulin-binding promotes the autocatalytic cleavage and activation of C1R. Activated C1R then cleaves and activates C1S, the second protease of the classical complement pathway. It is unclear if C1R activates C1S within single, strained C1 complexes or between neighboring C1 complexes on surfaces. This Mus musculus (Mouse) protein is Complement C1r-B subcomponent (C1rb).